The chain runs to 113 residues: Putative glycerol transporter Lin0367 (113 aa).

4 helical membrane passes run 3–23, 30–50, 63–83, and 92–112; these read IGIA…IRMM, EWGA…VWTI, GTVW…ASLL, and VVNL…LSLF.

The protein resides in the membrane. Functionally, could be involved in the glycerol uptake either via facilitated diffusion or active transport. The chain is Putative glycerol transporter Lin0367 from Listeria innocua serovar 6a (strain ATCC BAA-680 / CLIP 11262).